A 613-amino-acid polypeptide reads, in one-letter code: Zinc metalloproteinase-disintegrin-like MTP8 (613 aa).

The first 20 residues, 1–20 (MIEVLLVTICFTVFPYQGSP), serve as a signal peptide directing secretion. The propeptide occupies 21 to 191 (IILESGNVND…DETIEKISQL (171 aa)). The region spanning 205-401 (KYIELYVVVD…VRPQCILNKP (197 aa)) is the Peptidase M12B domain. Glu-208 is a Ca(2+) binding site. Asn-282 carries N-linked (GlcNAc...) asparagine glycosylation. Asp-292 contacts Ca(2+). 3 disulfides stabilise this stretch: Cys-316–Cys-396, Cys-356–Cys-380, and Cys-358–Cys-363. His-341, His-345, and His-351 together coordinate Zn(2+). The Ca(2+) site is built by Cys-396, Asn-399, Asn-414, Phe-416, Glu-418, Glu-421, and Asp-424. The 87-residue stretch at 409–495 (PPVCGNYFVE…KCPTDSFQRN (87 aa)) folds into the Disintegrin domain. Cystine bridges form between Cys-412–Cys-441, Cys-423–Cys-436, Cys-425–Cys-431, Cys-435–Cys-458, Cys-449–Cys-455, Cys-454–Cys-480, Cys-467–Cys-487, Cys-474–Cys-506, Cys-499–Cys-511, Cys-518–Cys-568, Cys-533–Cys-575, Cys-543–Cys-577, Cys-546–Cys-556, Cys-563–Cys-601, and Cys-595–Cys-606. Residue Asn-437 is glycosylated (N-linked (GlcNAc...) asparagine). The D/ECD-tripeptide motif lies at 473 to 475 (DCD). 4 residues coordinate Ca(2+): Asp-475, Leu-476, Glu-478, and Asp-490. 2 N-linked (GlcNAc...) asparagine glycosylation sites follow: Asn-550 and Asn-572.

This sequence belongs to the venom metalloproteinase (M12B) family. P-III subfamily. Monomer. Zn(2+) is required as a cofactor. Expressed by the venom gland.

It localises to the secreted. Snake venom zinc metalloproteinase that may impair hemostasis in the prey. This Drysdalia coronoides (White-lipped snake) protein is Zinc metalloproteinase-disintegrin-like MTP8.